A 111-amino-acid chain; its full sequence is WAP four-disulfide core domain protein 12 (111 aa).

The signal sequence occupies residues 1–23 (MGSSSFLVLMVSLALVTLVAAEG). The 48-residue stretch at 27–74 (NIEKPGVCPADNIRCIKSDPPQCHTDQDCQGIRKCCYLHCGFKCVIPV) folds into the WAP domain. 4 disulfides stabilise this stretch: cysteine 34–cysteine 62, cysteine 41–cysteine 66, cysteine 49–cysteine 61, and cysteine 55–cysteine 70. A disordered region spans residues 80 to 111 (GGNKDEDVSRPCPEPGWEAKPPGVFSTRCPQK).

The protein localises to the secreted. Antibacterial protein. Putative acid-stable proteinase inhibitor. The polypeptide is WAP four-disulfide core domain protein 12 (WFDC12) (Callithrix jacchus (White-tufted-ear marmoset)).